Consider the following 582-residue polypeptide: 5-aminolevulinate synthase, erythroid-specific, mitochondrial (582 aa).

A succinyl-CoA-binding site is contributed by R158. The pyridoxal 5'-phosphate site is built by C253 and F254. Succinyl-CoA-binding residues include S275 and R294. 3 residues coordinate pyridoxal 5'-phosphate: S327, H355, and T383. Residue K386 is part of the active site. The residue at position 386 (K386) is an N6-(pyridoxal phosphate)lysine. Positions 415 and 416 each coordinate pyridoxal 5'-phosphate. Position 503 (T503) interacts with succinyl-CoA.

This sequence belongs to the class-II pyridoxal-phosphate-dependent aminotransferase family. In terms of assembly, homodimer. The cofactor is pyridoxal 5'-phosphate.

It is found in the mitochondrion inner membrane. The catalysed reaction is succinyl-CoA + glycine + H(+) = 5-aminolevulinate + CO2 + CoA. It functions in the pathway porphyrin-containing compound metabolism; protoporphyrin-IX biosynthesis; 5-aminolevulinate from glycine: step 1/1. In terms of biological role, catalyzes the pyridoxal 5'-phosphate (PLP)-dependent condensation of succinyl-CoA and glycine to form aminolevulinic acid (ALA), with CoA and CO2 as by-products. Contributes significantly to heme formation during erythropoiesis. The polypeptide is 5-aminolevulinate synthase, erythroid-specific, mitochondrial (alas2) (Opsanus tau (Oyster toadfish)).